A 171-amino-acid polypeptide reads, in one-letter code: Sec-independent protein translocase protein TatB (171 aa).

The chain crosses the membrane as a helical span at residues 1–21 (MFDIGFSELLLVFIIGLVVLG). The tract at residues 89–171 (AESMKRSYVA…APSPSSSDKP (83 aa)) is disordered. A compositionally biased stretch (basic and acidic residues) spans 100-123 (DPEKASDEAHTIHNPVVKDNETAH). Polar residues predominate over residues 130-139 (AAQTQASSPE).

It belongs to the TatB family. The Tat system comprises two distinct complexes: a TatABC complex, containing multiple copies of TatA, TatB and TatC subunits, and a separate TatA complex, containing only TatA subunits. Substrates initially bind to the TatABC complex, which probably triggers association of the separate TatA complex to form the active translocon.

It localises to the cell inner membrane. Part of the twin-arginine translocation (Tat) system that transports large folded proteins containing a characteristic twin-arginine motif in their signal peptide across membranes. Together with TatC, TatB is part of a receptor directly interacting with Tat signal peptides. TatB may form an oligomeric binding site that transiently accommodates folded Tat precursor proteins before their translocation. In Escherichia coli O1:K1 / APEC, this protein is Sec-independent protein translocase protein TatB.